Reading from the N-terminus, the 258-residue chain is MSDLKAAALRALKLMDLTTLNDNDTDEAVIALCKNAKTAVGNTAAVCIYPRFIPIAKKTLREQGTPEVRIATVTNFPHGNDDIEIAVAETKAAVAYGADEVDVVFPYRALIAGDETTGFELVKQCKEACGDVLLKVIIETGELKEEALIKKASQICIEAGANFIKTSTGKVPVNATPEYARMMLEVIRDMDVAKTVGFKPAGGVRTAEDAQAYLAMADDILGGDWADNMHYRFGASSLLTNLLNTLEVTEETADPSAY.

Catalysis depends on Asp-102, which acts as the Proton donor/acceptor. Residue Lys-165 is the Schiff-base intermediate with acetaldehyde of the active site. Lys-199 functions as the Proton donor/acceptor in the catalytic mechanism.

It belongs to the DeoC/FbaB aldolase family. DeoC type 2 subfamily.

The protein localises to the cytoplasm. The enzyme catalyses 2-deoxy-D-ribose 5-phosphate = D-glyceraldehyde 3-phosphate + acetaldehyde. The protein operates within carbohydrate degradation; 2-deoxy-D-ribose 1-phosphate degradation; D-glyceraldehyde 3-phosphate and acetaldehyde from 2-deoxy-alpha-D-ribose 1-phosphate: step 2/2. Functionally, catalyzes a reversible aldol reaction between acetaldehyde and D-glyceraldehyde 3-phosphate to generate 2-deoxy-D-ribose 5-phosphate. The polypeptide is Deoxyribose-phosphate aldolase (Aliivibrio fischeri (strain ATCC 700601 / ES114) (Vibrio fischeri)).